Here is a 147-residue protein sequence, read N- to C-terminus: SsrA-binding protein (147 aa).

Belongs to the SmpB family.

The protein resides in the cytoplasm. In terms of biological role, required for rescue of stalled ribosomes mediated by trans-translation. Binds to transfer-messenger RNA (tmRNA), required for stable association of tmRNA with ribosomes. tmRNA and SmpB together mimic tRNA shape, replacing the anticodon stem-loop with SmpB. tmRNA is encoded by the ssrA gene; the 2 termini fold to resemble tRNA(Ala) and it encodes a 'tag peptide', a short internal open reading frame. During trans-translation Ala-aminoacylated tmRNA acts like a tRNA, entering the A-site of stalled ribosomes, displacing the stalled mRNA. The ribosome then switches to translate the ORF on the tmRNA; the nascent peptide is terminated with the 'tag peptide' encoded by the tmRNA and targeted for degradation. The ribosome is freed to recommence translation, which seems to be the essential function of trans-translation. This chain is SsrA-binding protein, found in Mycoplasmopsis fermentans (strain ATCC 19989 / NBRC 14854 / NCTC 10117 / PG18) (Mycoplasma fermentans).